The sequence spans 857 residues: Dimethylglycine dehydrogenase, mitochondrial (857 aa).

The transit peptide at M1–A43 directs the protein to the mitochondrion. The segment at R15–W39 is disordered. FAD contacts are provided by residues C52–V53, E73–K74, and G80–L88. H84 is subject to Tele-8alpha-FAD histidine. Position 107 is an N6-acetyllysine (K107). K141 bears the N6-acetyllysine; alternate mark. K141 bears the N6-succinyllysine; alternate mark. K161 is modified (N6-acetyllysine). FAD is bound at residue V212. K216 carries the post-translational modification N6-acetyllysine. W244 provides a ligand contact to FAD. An N6-succinyllysine mark is found at K310 and K312. N6-acetyllysine is present on residues K328 and K353. F390–I395 contacts FAD. 3 positions are modified to N6-acetyllysine; alternate: K427, K469, and K516. K427, K469, and K516 each carry N6-succinyllysine; alternate. E573–T575 contributes to the (6S)-5,6,7,8-tetrahydrofolate binding site. K648 carries the post-translational modification N6-acetyllysine; alternate. N6-succinyllysine; alternate is present on K648. Residues Y669, E676–Y678, and Y737 each bind (6S)-5,6,7,8-tetrahydrofolate. The residue at position 757 (K757) is an N6-acetyllysine. N6-acetyllysine; alternate is present on K786. The residue at position 786 (K786) is an N6-succinyllysine; alternate. Residue K788 is modified to N6-succinyllysine.

This sequence belongs to the GcvT family. The cofactor is FAD.

The protein localises to the mitochondrion. The catalysed reaction is (6S)-5,6,7,8-tetrahydrofolyl-(gamma-L-Glu)(n) + N,N-dimethylglycine + oxidized [electron-transfer flavoprotein] + H(+) = (6R)-5,10-methylenetetrahydrofolyl-(gamma-L-Glu)(n) + sarcosine + reduced [electron-transfer flavoprotein]. It participates in amine and polyamine degradation; betaine degradation; sarcosine from betaine: step 2/2. Its function is as follows. Catalyzes the demethylation of N,N-dimethylglycine to sarcosine. Also has activity with sarcosine in vitro. This Rattus norvegicus (Rat) protein is Dimethylglycine dehydrogenase, mitochondrial (Dmgdh).